A 359-amino-acid chain; its full sequence is UPF0283 membrane protein Atu1356 (359 aa).

Residues 1-39 form a disordered region; sequence MKAPTQNDPQTRRPAAFTLETEEAARPSATQKRAPRSFD. A run of 2 helical transmembrane segments spans residues 75-95 and 108-128; these read FGKL…GLWA and WLGY…LALV.

This sequence belongs to the UPF0283 family.

The protein resides in the cell inner membrane. The chain is UPF0283 membrane protein Atu1356 from Agrobacterium fabrum (strain C58 / ATCC 33970) (Agrobacterium tumefaciens (strain C58)).